We begin with the raw amino-acid sequence, 330 residues long: uncharacterized protein (330 aa).

2 disordered regions span residues 136 to 160 (VPPS…DESS) and 172 to 314 (DNEK…SQFN). The segment covering 223–235 (PKPPAPPPPPPVP) has biased composition (pro residues). Residues 236 to 246 (ISMTPAAISVT) are compositionally biased toward low complexity. Polar residues-rich tracts occupy residues 263 to 276 (AQST…TTDE), 284 to 294 (TRSSSQSNSTV), and 304 to 314 (PASSPTFSQFN).

This is an uncharacterized protein from Danio rerio (Zebrafish).